Here is a 233-residue protein sequence, read N- to C-terminus: Small heat shock protein hspF (233 aa).

The sHSP domain occupies 129-233 (IPLFTFFEPL…ILLITVNKFL (105 aa)).

Belongs to the small heat shock protein (HSP20) family.

The protein is Small heat shock protein hspF (hspF-1) of Dictyostelium discoideum (Social amoeba).